We begin with the raw amino-acid sequence, 259 residues long: 3-deoxy-manno-octulosonate cytidylyltransferase (259 aa).

This sequence belongs to the KdsB family.

It localises to the cytoplasm. The catalysed reaction is 3-deoxy-alpha-D-manno-oct-2-ulosonate + CTP = CMP-3-deoxy-beta-D-manno-octulosonate + diphosphate. It functions in the pathway nucleotide-sugar biosynthesis; CMP-3-deoxy-D-manno-octulosonate biosynthesis; CMP-3-deoxy-D-manno-octulosonate from 3-deoxy-D-manno-octulosonate and CTP: step 1/1. Its pathway is bacterial outer membrane biogenesis; lipopolysaccharide biosynthesis. Activates KDO (a required 8-carbon sugar) for incorporation into bacterial lipopolysaccharide in Gram-negative bacteria. In Actinobacillus succinogenes (strain ATCC 55618 / DSM 22257 / CCUG 43843 / 130Z), this protein is 3-deoxy-manno-octulosonate cytidylyltransferase.